Consider the following 526-residue polypeptide: ATP synthase subunit alpha (526 aa).

171–178 (GDRQTGKT) is an ATP binding site.

The protein belongs to the ATPase alpha/beta chains family. As to quaternary structure, F-type ATPases have 2 components, CF(1) - the catalytic core - and CF(0) - the membrane proton channel. CF(1) has five subunits: alpha(3), beta(3), gamma(1), delta(1), epsilon(1). CF(0) has four main subunits: a, b, b' and c.

The protein localises to the cell inner membrane. It carries out the reaction ATP + H2O + 4 H(+)(in) = ADP + phosphate + 5 H(+)(out). Its function is as follows. Produces ATP from ADP in the presence of a proton gradient across the membrane. The alpha chain is a regulatory subunit. This is ATP synthase subunit alpha from Chlorobium phaeobacteroides (strain BS1).